The sequence spans 608 residues: UvrABC system protein C (608 aa).

One can recognise a GIY-YIG domain in the interval 13–91 (HKPGVYIMHD…IKKNSPKYNI (79 aa)). Positions 202-237 (DELTKKLTDKMMAASKNLNFELAAKLRDSITNIQVI) constitute a UVR domain.

The protein belongs to the UvrC family. As to quaternary structure, interacts with UvrB in an incision complex.

Its subcellular location is the cytoplasm. Functionally, the UvrABC repair system catalyzes the recognition and processing of DNA lesions. UvrC both incises the 5' and 3' sides of the lesion. The N-terminal half is responsible for the 3' incision and the C-terminal half is responsible for the 5' incision. The sequence is that of UvrABC system protein C from Finegoldia magna (strain ATCC 29328 / DSM 20472 / WAL 2508) (Peptostreptococcus magnus).